Consider the following 440-residue polypeptide: ATP-dependent protease ATPase subunit HslU (440 aa).

Residues valine 18, glycine 60 to glutamate 65, aspartate 254, glutamate 319, and arginine 391 each bind ATP.

Belongs to the ClpX chaperone family. HslU subfamily. As to quaternary structure, a double ring-shaped homohexamer of HslV is capped on each side by a ring-shaped HslU homohexamer. The assembly of the HslU/HslV complex is dependent on binding of ATP.

Its subcellular location is the cytoplasm. Its function is as follows. ATPase subunit of a proteasome-like degradation complex; this subunit has chaperone activity. The binding of ATP and its subsequent hydrolysis by HslU are essential for unfolding of protein substrates subsequently hydrolyzed by HslV. HslU recognizes the N-terminal part of its protein substrates and unfolds these before they are guided to HslV for hydrolysis. The sequence is that of ATP-dependent protease ATPase subunit HslU from Cellvibrio japonicus (strain Ueda107) (Pseudomonas fluorescens subsp. cellulosa).